The primary structure comprises 87 residues: Small ribosomal subunit protein bS20 (87 aa).

A compositionally biased stretch (basic residues) spans 1–11 (MANIKSAKKRA). A disordered region spans residues 1–26 (MANIKSAKKRAVQSEKRRQHNASQRS).

This sequence belongs to the bacterial ribosomal protein bS20 family.

In terms of biological role, binds directly to 16S ribosomal RNA. The polypeptide is Small ribosomal subunit protein bS20 (Actinobacillus pleuropneumoniae serotype 5b (strain L20)).